Reading from the N-terminus, the 615-residue chain is DNA mismatch repair protein MutL (615 aa).

Residues 370–397 (EPVAPRYTPAPASGSRPAAPWPNTQPGY) form a disordered region. Over residues 378–391 (PAPASGSRPAAPWP) the composition is skewed to low complexity.

The protein belongs to the DNA mismatch repair MutL/HexB family.

In terms of biological role, this protein is involved in the repair of mismatches in DNA. It is required for dam-dependent methyl-directed DNA mismatch repair. May act as a 'molecular matchmaker', a protein that promotes the formation of a stable complex between two or more DNA-binding proteins in an ATP-dependent manner without itself being part of a final effector complex. This Shigella dysenteriae serotype 1 (strain Sd197) protein is DNA mismatch repair protein MutL.